A 1315-amino-acid chain; its full sequence is Myopalladin (1315 aa).

Disordered stretches follow at residues 19-60 (SYLA…DLPD), 81-145 (INHD…TQSK), 166-204 (HSSK…TERR), and 230-266 (EAKR…LGQP). Basic and acidic residues-rich tracts occupy residues 23-35 (ETRH…RSRA) and 84-104 (DPLE…DQTK). 2 positions are modified to phosphoserine: Ser99 and Ser129. The span at 166 to 180 (HSSKRIRPRACKNHK) shows a compositional bias: basic residues. Over residues 184-199 (ESQNKVLQENSPTFSD) the composition is skewed to polar residues. The stretch at 219-240 (DNELNHAIEQREAKRREAELAA) forms a coiled coil. Phosphothreonine is present on Thr249. Residues 267–357 (PRFTQKLRSR…DSTSAEIYIE (91 aa)) enclose the Ig-like 1 domain. Residues Cys288 and Cys339 are joined by a disulfide bond. The disordered stretch occupies residues 359–392 (VSSSDSEGDPNKEEMNRIQKPNEVSSPPTTSAAI). The Ig-like 2 domain occupies 432-528 (PVFTKMLQNL…GTVSSIAQLD (97 aa)). A disulfide bridge connects residues Cys453 and Cys512. Disordered stretches follow at residues 535-652 (ISDN…VLAK), 674-704 (LQNT…SSKQ), and 725-747 (SSTS…NTPQ). Polar residues predominate over residues 609–623 (SSGSGAANTSQTRPN). Ser641 carries the post-translational modification Phosphoserine. The segment covering 725-741 (SSTSTATVSPSSSPVFT) has biased composition (low complexity). Ser754 bears the Phosphoserine mark. Disordered regions lie at residues 762 to 814 (HPST…TPVS) and 840 to 865 (NAMG…KAPQ). Pro residues predominate over residues 779 to 790 (PAPPSPAEPAAP). Ser809 and Ser814 each carry phosphoserine. Phosphoserine is present on residues Ser903 and Ser924. Ig-like domains follow at residues 941–1025 (PIFD…GRIS), 1068–1157 (PHFL…LELT), and 1167–1257 (PVIL…ARLD). A disulfide bond links Cys1089 and Cys1141.

It belongs to the myotilin/palladin family. As to quaternary structure, interacts with TTN/titin, NEB, NEBL, ACTN2 and CARP.

It localises to the cytoplasm. Its subcellular location is the nucleus. The protein localises to the myofibril. It is found in the sarcomere. The protein resides in the z line. In terms of biological role, component of the sarcomere that tethers together nebulin (skeletal muscle) and nebulette (cardiac muscle) to alpha-actinin, at the Z lines. This chain is Myopalladin (Mypn), found in Mus musculus (Mouse).